We begin with the raw amino-acid sequence, 397 residues long: Tryptophan synthase beta chain (397 aa).

Lys-87 carries the post-translational modification N6-(pyridoxal phosphate)lysine.

The protein belongs to the TrpB family. Tetramer of two alpha and two beta chains. Requires pyridoxal 5'-phosphate as cofactor.

The enzyme catalyses (1S,2R)-1-C-(indol-3-yl)glycerol 3-phosphate + L-serine = D-glyceraldehyde 3-phosphate + L-tryptophan + H2O. The protein operates within amino-acid biosynthesis; L-tryptophan biosynthesis; L-tryptophan from chorismate: step 5/5. Its function is as follows. The beta subunit is responsible for the synthesis of L-tryptophan from indole and L-serine. This Salmonella choleraesuis (strain SC-B67) protein is Tryptophan synthase beta chain.